We begin with the raw amino-acid sequence, 489 residues long: Glutamyl-tRNA(Gln) amidotransferase subunit A (489 aa).

Active-site charge relay system residues include K75 and S150. S174 functions as the Acyl-ester intermediate in the catalytic mechanism.

It belongs to the amidase family. GatA subfamily. In terms of assembly, heterotrimer of A, B and C subunits.

It catalyses the reaction L-glutamyl-tRNA(Gln) + L-glutamine + ATP + H2O = L-glutaminyl-tRNA(Gln) + L-glutamate + ADP + phosphate + H(+). Its function is as follows. Allows the formation of correctly charged Gln-tRNA(Gln) through the transamidation of misacylated Glu-tRNA(Gln) in organisms which lack glutaminyl-tRNA synthetase. The reaction takes place in the presence of glutamine and ATP through an activated gamma-phospho-Glu-tRNA(Gln). In Gloeobacter violaceus (strain ATCC 29082 / PCC 7421), this protein is Glutamyl-tRNA(Gln) amidotransferase subunit A.